Here is a 770-residue protein sequence, read N- to C-terminus: tRNA(Met) cytidine acetyltransferase TmcA 2 (770 aa).

ATP contacts are provided by glutamine 209 and arginine 390. In terms of domain architecture, N-acetyltransferase spans 458 to 608 (MIMLDGIHHK…YPVVVIRPIS (151 aa)). 533-535 (IAV) lines the acetyl-CoA pocket.

It belongs to the TmcA family.

The protein localises to the cytoplasm. The catalysed reaction is cytidine(34) in elongator tRNA(Met) + acetyl-CoA + ATP + H2O = N(4)-acetylcytidine(34) in elongator tRNA(Met) + ADP + phosphate + CoA + H(+). It carries out the reaction a cytidine in RNA + acetyl-CoA + ATP + H2O = an N(4)-acetylcytidine in RNA + ADP + phosphate + CoA + H(+). The enzyme catalyses a cytidine in tRNA + acetyl-CoA + ATP + H2O = an N(4)-acetylcytidine in tRNA + ADP + phosphate + CoA + H(+). It catalyses the reaction a cytidine in mRNA + acetyl-CoA + ATP + H2O = an N(4)-acetylcytidine in mRNA + ADP + phosphate + CoA + H(+). Its function is as follows. Catalyzes the formation of N(4)-acetylcytidine (ac(4)C) at the wobble position of tRNA(Met), by using acetyl-CoA as an acetyl donor and ATP (or GTP). Functionally, catalyzes the formation of 41 N(4)-acetylcytidine (ac(4)C) sites in RNA, almost always on the middle C of a CCG motif. Modifications are found mostly in tRNA, with small amounts found in rRNA and mRNA. This is tRNA(Met) cytidine acetyltransferase TmcA 2 from Saccharolobus solfataricus (strain ATCC 35092 / DSM 1617 / JCM 11322 / P2) (Sulfolobus solfataricus).